The chain runs to 251 residues: Flap endonuclease Xni (251 aa).

Asp-104 lines the Mg(2+) pocket. Positions 160 to 249 (VLPRQLPDYW…IDGNLQQLRL (90 aa)) constitute a 5'-3' exonuclease domain. Leu-171, Ala-172, Pro-180, Val-182, and Ile-185 together coordinate K(+). Positions 184-189 (GIGPKS) are interaction with DNA.

The protein belongs to the Xni family. Mg(2+) is required as a cofactor. It depends on K(+) as a cofactor.

In terms of biological role, has flap endonuclease activity. During DNA replication, flap endonucleases cleave the 5'-overhanging flap structure that is generated by displacement synthesis when DNA polymerase encounters the 5'-end of a downstream Okazaki fragment. This Salmonella choleraesuis (strain SC-B67) protein is Flap endonuclease Xni.